Reading from the N-terminus, the 315-residue chain is MSDSLRIIFAGTPDFAARHLGALLSSQHKIVGVFTQPDRPAGRGNKLTPSPVKILAEHHGIPVFQPKSLRPEENQHLVADLNADIMVVVAYGLILPAAVLAMPRLGCINVHGSLLPRWRGAAPIQRSVWAGDEKTGITIMQMDIGLDTGAMLHKIECAIQPEDTSATLYDKLAQLGPQGLLITLQQLAAGTALAEVQNETQATYAEKLSKEEAKLDWTLSATQLERCIRAFNPWPVSYFIVDEQPIKVWQAQVLPAGEDAEPGTIIHADKHGIQVATADGVLNITQLQPAGKKAMSAADLLNSRREWFIPGSQLV.

Position 113 to 116 (113 to 116 (SLLP)) interacts with (6S)-5,6,7,8-tetrahydrofolate.

The protein belongs to the Fmt family.

It carries out the reaction L-methionyl-tRNA(fMet) + (6R)-10-formyltetrahydrofolate = N-formyl-L-methionyl-tRNA(fMet) + (6S)-5,6,7,8-tetrahydrofolate + H(+). Attaches a formyl group to the free amino group of methionyl-tRNA(fMet). The formyl group appears to play a dual role in the initiator identity of N-formylmethionyl-tRNA by promoting its recognition by IF2 and preventing the misappropriation of this tRNA by the elongation apparatus. The sequence is that of Methionyl-tRNA formyltransferase from Yersinia pseudotuberculosis serotype O:1b (strain IP 31758).